The sequence spans 337 residues: Probable poly [ADP-ribose] polymerase DDB_G0278045 (337 aa).

A PARP catalytic domain is found at 21–231; sequence KKWDIIYKQR…NNNKNKNKNN (211 aa). The segment covering 218–242 has biased composition (low complexity); sequence NNTNNNNKNKNKNNNKNNNKNIKIQ. The segment at 218 to 247 is disordered; sequence NNTNNNNKNKNKNNNKNNNKNIKIQNENKN.

The catalysed reaction is L-aspartyl-[protein] + NAD(+) = 4-O-(ADP-D-ribosyl)-L-aspartyl-[protein] + nicotinamide. It catalyses the reaction L-glutamyl-[protein] + NAD(+) = 5-O-(ADP-D-ribosyl)-L-glutamyl-[protein] + nicotinamide. It carries out the reaction NAD(+) + (ADP-D-ribosyl)n-acceptor = nicotinamide + (ADP-D-ribosyl)n+1-acceptor + H(+).. The polypeptide is Probable poly [ADP-ribose] polymerase DDB_G0278045 (Dictyostelium discoideum (Social amoeba)).